A 194-amino-acid polypeptide reads, in one-letter code: Molybdenum cofactor guanylyltransferase (194 aa).

GTP contacts are provided by residues 12-14 (LAG), K25, N53, D70, and D100. D100 is a binding site for Mg(2+).

It belongs to the MobA family. As to quaternary structure, monomer. Requires Mg(2+) as cofactor.

The protein resides in the cytoplasm. The catalysed reaction is Mo-molybdopterin + GTP + H(+) = Mo-molybdopterin guanine dinucleotide + diphosphate. Transfers a GMP moiety from GTP to Mo-molybdopterin (Mo-MPT) cofactor (Moco or molybdenum cofactor) to form Mo-molybdopterin guanine dinucleotide (Mo-MGD) cofactor. In Aliivibrio fischeri (strain ATCC 700601 / ES114) (Vibrio fischeri), this protein is Molybdenum cofactor guanylyltransferase.